A 276-amino-acid polypeptide reads, in one-letter code: MAAQTLPASGAAVTFNTQRTRAYLLKLPLFTRATVLIIVLTWVLTLVGKSWNWDVKTWGALIPDEIGIATLYRINTFPFIHLNIFHTILNIVAFTPLLERFEHEHGTLTSVALFFGPFATIPGLIYVFVERFILHANTPVMGASMWVFLLLGMEAIRTYKTNPYFTISTYNIPTWITPLLLVVVTAALLPSSSFLGHLAGLLVGYGFGLGYLKFLAPPEWALRFIEGKLNLLGRLPHYVSVDQKTFGRFGVLPSSASSAEAGIPFSGVSGGQRLGP.

Transmembrane regions (helical) follow at residues 27–47, 77–97, 109–129, 132–152, and 175–195; these read LPLF…LTLV, FPFI…FTPL, TSVA…YVFV, FILH…LLLG, and WITP…SSFL. The active-site Nucleophile is S144. H197 is an active-site residue. The helical transmembrane segment at 198 to 218 threads the bilayer; sequence LAGLLVGYGFGLGYLKFLAPP.

The protein belongs to the peptidase S54 family.

It localises to the golgi apparatus membrane. Its subcellular location is the golgi apparatus. It is found in the cis-Golgi network membrane. The enzyme catalyses Cleaves type-1 transmembrane domains using a catalytic dyad composed of serine and histidine that are contributed by different transmembrane domains.. Functionally, probable rhomboid-type serine protease that catalyzes intramembrane proteolysis. The chain is Rhomboid-type serine protease 2 (rbd-2) from Neurospora crassa (strain ATCC 24698 / 74-OR23-1A / CBS 708.71 / DSM 1257 / FGSC 987).